The sequence spans 172 residues: Large ribosomal subunit protein uL10 (172 aa).

It belongs to the universal ribosomal protein uL10 family. Part of the ribosomal stalk of the 50S ribosomal subunit. The N-terminus interacts with L11 and the large rRNA to form the base of the stalk. The C-terminus forms an elongated spine to which L12 dimers bind in a sequential fashion forming a multimeric L10(L12)X complex.

Forms part of the ribosomal stalk, playing a central role in the interaction of the ribosome with GTP-bound translation factors. This chain is Large ribosomal subunit protein uL10, found in Chlorobium phaeovibrioides (strain DSM 265 / 1930) (Prosthecochloris vibrioformis (strain DSM 265)).